Consider the following 153-residue polypeptide: ATP synthase subunit b' (153 aa).

The chain crosses the membrane as a helical span at residues Thr-20 to Phe-40.

It belongs to the ATPase B chain family. F-type ATPases have 2 components, F(1) - the catalytic core - and F(0) - the membrane proton channel. F(1) has five subunits: alpha(3), beta(3), gamma(1), delta(1), epsilon(1). F(0) has four main subunits: a(1), b(1), b'(1) and c(10-14). The alpha and beta chains form an alternating ring which encloses part of the gamma chain. F(1) is attached to F(0) by a central stalk formed by the gamma and epsilon chains, while a peripheral stalk is formed by the delta, b and b' chains.

Its subcellular location is the cellular thylakoid membrane. In terms of biological role, f(1)F(0) ATP synthase produces ATP from ADP in the presence of a proton or sodium gradient. F-type ATPases consist of two structural domains, F(1) containing the extramembraneous catalytic core and F(0) containing the membrane proton channel, linked together by a central stalk and a peripheral stalk. During catalysis, ATP synthesis in the catalytic domain of F(1) is coupled via a rotary mechanism of the central stalk subunits to proton translocation. Its function is as follows. Component of the F(0) channel, it forms part of the peripheral stalk, linking F(1) to F(0). The b'-subunit is a diverged and duplicated form of b found in plants and photosynthetic bacteria. The sequence is that of ATP synthase subunit b' from Prochlorococcus marinus (strain NATL1A).